Consider the following 982-residue polypeptide: Envelope glycoprotein gp160 (982 aa).

Positions 1-106 (MASKESKPSR…CLMWEVRKGN (106 aa)) are cleaved as a signal peptide. Topologically, residues 107-831 (QCQAEEVIAL…WSSWFSWLKY (725 aa)) are extracellular. N-linked (GlcNAc...) asparagine; by host glycosylation is found at Asn-140, Asn-161, Asn-206, Asn-258, Asn-298, Asn-364, Asn-381, Asn-387, Asn-403, Asn-414, Asn-435, Asn-439, Asn-470, Asn-475, Asn-481, Asn-491, Asn-501, Asn-515, Asn-527, Asn-537, Asn-542, Asn-543, and Asn-568. The fusion peptide stretch occupies residues 657 to 677 (GIGLVIVLAIMAIIAAAGAGL). Residues 689–738 (RTAVQSLANATAAQQEVLEASYAMVQHIAKGIRILEARVARVEALVDMMV) are a coiled coil. An N-linked (GlcNAc...) asparagine; by host glycan is attached at Asn-697. Residues 723-738 (LEARVARVEALVDMMV) form an immunosuppression region. Residues Asn-764, Asn-771, Asn-787, and Asn-821 are each glycosylated (N-linked (GlcNAc...) asparagine; by host). Residues 779–814 (EEIEQHEGNLSLLLREAALQVHIAQRDARRIPDAWK) are a coiled coil. The helical transmembrane segment at 832–852 (IPWIIMGIVGLMCFRILMCVI) threads the bilayer. Over 853 to 982 (SMCLQAYKQV…PTLENDYVEL (130 aa)) the chain is Cytoplasmic. Cys-855 carries S-palmitoyl cysteine; by host lipidation.

As to quaternary structure, the mature envelope protein (Env) consists of a trimer of SU-TM heterodimers attached by noncovalent interactions or by a labile interchain disulfide bond. Post-translationally, specific enzymatic cleavages in vivo yield mature proteins. Envelope glycoproteins are synthesized as an inactive precursor that is N-glycosylated and processed likely by host cell furin or by a furin-like protease in the Golgi to yield the mature SU and TM proteins. The cleavage site between SU and TM requires the minimal sequence [KR]-X-[KR]-R. In terms of processing, the transmembrane protein is palmitoylated.

The protein localises to the virion membrane. It is found in the host cell membrane. Its function is as follows. The surface protein (SU) attaches the virus to the host cell by binding to its receptor. This interaction triggers the refolding of the transmembrane protein (TM) and is thought to activate its fusogenic potential by unmasking its fusion peptide. Fusion occurs at the host cell plasma membrane. Functionally, the transmembrane protein (TM) acts as a class I viral fusion protein. Under the current model, the protein has at least 3 conformational states: pre-fusion native state, pre-hairpin intermediate state, and post-fusion hairpin state. During viral and target cell membrane fusion, the coiled coil regions (heptad repeats) assume a trimer-of-hairpins structure, positioning the fusion peptide in close proximity to the C-terminal region of the ectodomain. The formation of this structure appears to drive apposition and subsequent fusion of viral and target cell membranes. Membranes fusion leads to delivery of the nucleocapsid into the cytoplasm. The polypeptide is Envelope glycoprotein gp160 (env) (Maedi visna virus (strain 1514) (MVV)).